An 82-amino-acid chain; its full sequence is MNTKLVVVFLLSAILFVSVTASRPGKDLERDEAYETYDDERPYFKRACKDNLPAATCSNVKANNNCSSEKYKTNCAKTCGEC.

The first 21 residues, 1–21, serve as a signal peptide directing secretion; sequence MNTKLVVVFLLSAILFVSVTA. Residues 22-46 constitute a propeptide that is removed on maturation; sequence SRPGKDLERDEAYETYDDERPYFKR. One can recognise a ShKT domain in the interval 48-82; the sequence is CKDNLPAATCSNVKANNNCSSEKYKTNCAKTCGEC. 3 cysteine pairs are disulfide-bonded: C48–C82, C57–C75, and C66–C79. The tract at residues 70–71 is theoritically crucial for binding to potassium channels; it reads KY.

The protein belongs to the sea anemone type 1 potassium channel toxin family. Type 1b subfamily.

The protein localises to the secreted. Its subcellular location is the nematocyst. Probable toxin with unknown function. In contrast to similar toxins, this toxin does not inhibit voltage-gated potassium channels (tested at 100 nM). Does not show antimicrobial activities against bacteria and yeasts. In Oulactis sp. (Sea anemone), this protein is U-actitoxin-Oulsp2.